The primary structure comprises 154 residues: Malate dehydrogenase (154 aa).

The substrate site is built by R3 and R9. Residues N16 and 39-41 contribute to the NAD(+) site; that span reads ITN. Residues N41 and R75 each coordinate substrate. Residue H99 is the Proton acceptor of the active site. M149 provides a ligand contact to NAD(+).

It belongs to the LDH/MDH superfamily. MDH type 1 family. As to quaternary structure, homodimer.

The enzyme catalyses (S)-malate + NAD(+) = oxaloacetate + NADH + H(+). Functionally, catalyzes the reversible oxidation of malate to oxaloacetate. This chain is Malate dehydrogenase (mdh), found in Pectobacterium carotovorum subsp. carotovorum (Erwinia carotovora subsp. carotovora).